The following is a 269-amino-acid chain: Undecaprenyl-diphosphatase (269 aa).

8 helical membrane passes run 1–21 (MDIM…ILPI), 40–59 (GLTF…CVYF), 87–107 (FFII…EKPI), 117–137 (LIAL…TTGP), 147–166 (LRGA…PGVS), 188–208 (FSFL…MGEL), 220–240 (PLLA…ALLL), and 248–268 (LYPF…YLFA).

The protein belongs to the UppP family.

Its subcellular location is the cell inner membrane. It carries out the reaction di-trans,octa-cis-undecaprenyl diphosphate + H2O = di-trans,octa-cis-undecaprenyl phosphate + phosphate + H(+). Catalyzes the dephosphorylation of undecaprenyl diphosphate (UPP). Confers resistance to bacitracin. This Geobacter sulfurreducens (strain ATCC 51573 / DSM 12127 / PCA) protein is Undecaprenyl-diphosphatase.